Reading from the N-terminus, the 1342-residue chain is DNA-directed RNA polymerase subunit beta (1342 aa).

It belongs to the RNA polymerase beta chain family. In terms of assembly, the RNAP catalytic core consists of 2 alpha, 1 beta, 1 beta' and 1 omega subunit. When a sigma factor is associated with the core the holoenzyme is formed, which can initiate transcription.

It catalyses the reaction RNA(n) + a ribonucleoside 5'-triphosphate = RNA(n+1) + diphosphate. Functionally, DNA-dependent RNA polymerase catalyzes the transcription of DNA into RNA using the four ribonucleoside triphosphates as substrates. In Aeromonas hydrophila subsp. hydrophila (strain ATCC 7966 / DSM 30187 / BCRC 13018 / CCUG 14551 / JCM 1027 / KCTC 2358 / NCIMB 9240 / NCTC 8049), this protein is DNA-directed RNA polymerase subunit beta.